We begin with the raw amino-acid sequence, 136 residues long: NADPH-dependent 7-cyano-7-deazaguanine reductase (136 aa).

C50 serves as the catalytic Thioimide intermediate. The Proton donor role is filled by D57. Residues 72-74 (YEL) and 91-92 (HE) each bind substrate.

Belongs to the GTP cyclohydrolase I family. QueF type 1 subfamily.

The protein localises to the cytoplasm. It catalyses the reaction 7-aminomethyl-7-carbaguanine + 2 NADP(+) = 7-cyano-7-deazaguanine + 2 NADPH + 3 H(+). It participates in tRNA modification; tRNA-queuosine biosynthesis. Its function is as follows. Catalyzes the NADPH-dependent reduction of 7-cyano-7-deazaguanine (preQ0) to 7-aminomethyl-7-deazaguanine (preQ1). The polypeptide is NADPH-dependent 7-cyano-7-deazaguanine reductase (Prochlorococcus marinus (strain MIT 9312)).